The chain runs to 319 residues: NADH-quinone oxidoreductase subunit H 1 (319 aa).

A run of 8 helical transmembrane segments spans residues 8–28, 74–94, 107–127, 147–167, 179–199, 230–250, 258–278, and 297–317; these read LFNI…LIWI, LVFI…FAVI, IGLL…VLGG, LSYE…AGTF, MWFC…GIAE, FFVG…TLFF, LPPL…FILL, and LMLP…LALD.

Belongs to the complex I subunit 1 family. NDH-1 is composed of 14 different subunits. Subunits NuoA, H, J, K, L, M, N constitute the membrane sector of the complex.

The protein resides in the cell inner membrane. The catalysed reaction is a quinone + NADH + 5 H(+)(in) = a quinol + NAD(+) + 4 H(+)(out). Its function is as follows. NDH-1 shuttles electrons from NADH, via FMN and iron-sulfur (Fe-S) centers, to quinones in the respiratory chain. The immediate electron acceptor for the enzyme in this species is believed to be ubiquinone. Couples the redox reaction to proton translocation (for every two electrons transferred, four hydrogen ions are translocated across the cytoplasmic membrane), and thus conserves the redox energy in a proton gradient. This subunit may bind ubiquinone. This Nitrosococcus oceani (strain ATCC 19707 / BCRC 17464 / JCM 30415 / NCIMB 11848 / C-107) protein is NADH-quinone oxidoreductase subunit H 1.